The sequence spans 300 residues: Porphobilinogen deaminase (300 aa).

C239 carries the S-(dipyrrolylmethanemethyl)cysteine modification.

Belongs to the HMBS family. In terms of assembly, monomer. Dipyrromethane serves as cofactor.

It carries out the reaction 4 porphobilinogen + H2O = hydroxymethylbilane + 4 NH4(+). It functions in the pathway porphyrin-containing compound metabolism; protoporphyrin-IX biosynthesis; coproporphyrinogen-III from 5-aminolevulinate: step 2/4. Its function is as follows. Tetrapolymerization of the monopyrrole PBG into the hydroxymethylbilane pre-uroporphyrinogen in several discrete steps. The protein is Porphobilinogen deaminase of Francisella tularensis subsp. holarctica (strain FTNF002-00 / FTA).